The chain runs to 297 residues: UDP-3-O-acyl-N-acetylglucosamine deacetylase (297 aa).

Zn(2+) contacts are provided by histidine 77, histidine 236, and aspartate 240. Residue histidine 263 is the Proton donor of the active site.

This sequence belongs to the LpxC family. It depends on Zn(2+) as a cofactor.

The enzyme catalyses a UDP-3-O-[(3R)-3-hydroxyacyl]-N-acetyl-alpha-D-glucosamine + H2O = a UDP-3-O-[(3R)-3-hydroxyacyl]-alpha-D-glucosamine + acetate. Its pathway is glycolipid biosynthesis; lipid IV(A) biosynthesis; lipid IV(A) from (3R)-3-hydroxytetradecanoyl-[acyl-carrier-protein] and UDP-N-acetyl-alpha-D-glucosamine: step 2/6. In terms of biological role, catalyzes the hydrolysis of UDP-3-O-myristoyl-N-acetylglucosamine to form UDP-3-O-myristoylglucosamine and acetate, the committed step in lipid A biosynthesis. The sequence is that of UDP-3-O-acyl-N-acetylglucosamine deacetylase from Psychrobacter sp. (strain PRwf-1).